Reading from the N-terminus, the 215-residue chain is UPF0502 protein YceH (215 aa).

An N6-acetyllysine modification is found at Lys80.

It belongs to the UPF0502 family.

This is UPF0502 protein YceH from Escherichia fergusonii (strain ATCC 35469 / DSM 13698 / CCUG 18766 / IAM 14443 / JCM 21226 / LMG 7866 / NBRC 102419 / NCTC 12128 / CDC 0568-73).